The sequence spans 173 residues: MQTIILGGGCFWCTESVFLSVKGVQSVISGYMGGDAVSANYEAVCGGNTGHVEVIKVEFDESIVPLEVILDVFFATHDPTTMDRQGNDVGSQYRSVVFYTDETQKPTIDRTINKLRDMGINVVTEVHPAVEFYQAEDTHQDFFNRNPGQAYCNFAIPPKLAKLRKEFSQYMVS.

Cysteine 10 is a catalytic residue.

The protein belongs to the MsrA Met sulfoxide reductase family.

It carries out the reaction L-methionyl-[protein] + [thioredoxin]-disulfide + H2O = L-methionyl-(S)-S-oxide-[protein] + [thioredoxin]-dithiol. The enzyme catalyses [thioredoxin]-disulfide + L-methionine + H2O = L-methionine (S)-S-oxide + [thioredoxin]-dithiol. Its function is as follows. Has an important function as a repair enzyme for proteins that have been inactivated by oxidation. Catalyzes the reversible oxidation-reduction of methionine sulfoxide in proteins to methionine. The protein is Peptide methionine sulfoxide reductase MsrA of Psychrobacter cryohalolentis (strain ATCC BAA-1226 / DSM 17306 / VKM B-2378 / K5).